The sequence spans 765 residues: Phosphoribosylformylglycinamidine synthase subunit PurL (765 aa).

The active site involves His-41. ATP contacts are provided by Tyr-44 and Lys-83. Position 85 (Glu-85) interacts with Mg(2+). Substrate contacts are provided by residues 86–89 (SHNH) and Arg-108. His-87 functions as the Proton acceptor in the catalytic mechanism. Residue Asp-109 coordinates Mg(2+). Gln-232 serves as a coordination point for substrate. Position 260 (Asp-260) interacts with Mg(2+). A substrate-binding site is contributed by 304–306 (ESQ). ATP is bound by residues Asp-503 and Gly-540. Asn-541 serves as a coordination point for Mg(2+). Ser-543 contacts substrate.

Belongs to the FGAMS family. Monomer. Part of the FGAM synthase complex composed of 1 PurL, 1 PurQ and 2 PurS subunits.

The protein localises to the cytoplasm. The enzyme catalyses N(2)-formyl-N(1)-(5-phospho-beta-D-ribosyl)glycinamide + L-glutamine + ATP + H2O = 2-formamido-N(1)-(5-O-phospho-beta-D-ribosyl)acetamidine + L-glutamate + ADP + phosphate + H(+). It functions in the pathway purine metabolism; IMP biosynthesis via de novo pathway; 5-amino-1-(5-phospho-D-ribosyl)imidazole from N(2)-formyl-N(1)-(5-phospho-D-ribosyl)glycinamide: step 1/2. In terms of biological role, part of the phosphoribosylformylglycinamidine synthase complex involved in the purines biosynthetic pathway. Catalyzes the ATP-dependent conversion of formylglycinamide ribonucleotide (FGAR) and glutamine to yield formylglycinamidine ribonucleotide (FGAM) and glutamate. The FGAM synthase complex is composed of three subunits. PurQ produces an ammonia molecule by converting glutamine to glutamate. PurL transfers the ammonia molecule to FGAR to form FGAM in an ATP-dependent manner. PurS interacts with PurQ and PurL and is thought to assist in the transfer of the ammonia molecule from PurQ to PurL. The polypeptide is Phosphoribosylformylglycinamidine synthase subunit PurL (Synechococcus sp. (strain WH7803)).